The sequence spans 443 residues: Protein SCAR (443 aa).

The interval 1 to 96 (MVLITRYLPS…DYHRNTSIDT (96 aa)) is interaction with brk1 and abiA. Residues 166 to 201 (VAEQQKLHEEARQRKRERREARLKKKGEKNEVEVKK) adopt a coiled-coil conformation. Disordered regions lie at residues 176–197 (ARQR…KNEV) and 220–386 (INIE…RSDL). Positions 178-192 (QRKRERREARLKKKG) are enriched in basic residues. Polar residues predominate over residues 221–252 (NIESPHTSSPQIQHQSNNTATPQHTTQHFGTN). 2 stretches are compositionally biased toward low complexity: residues 263–277 (SQSS…INSY) and 285–305 (NTST…TGFN). The span at 306 to 323 (TPPPPMSNNNNMPPPPPM) shows a compositional bias: pro residues. The segment covering 324–338 (QQNGGAANNRLSVHN) has biased composition (polar residues). A compositionally biased stretch (pro residues) spans 346–365 (PAPPPPPPPPSAPAPPPPPM). The region spanning 382–399 (ARSDLLSSIMQGMALKPA) is the WH2 domain.

It belongs to the SCAR/WAVE family. Part of a Scar/WAVE complex containing brk1, scrA, abiA, pirA and napA. Interacts with brk1 and abiA.

The protein localises to the cytoplasm. Its subcellular location is the cytoskeleton. It is found in the cell projection. The protein resides in the pseudopodium tip. It localises to the filopodium tip. Its function is as follows. Involved in regulation of actin and microtubule organization. Regulates phagocytosis and macropinocytosis. This Dictyostelium discoideum (Social amoeba) protein is Protein SCAR (scrA).